Here is a 557-residue protein sequence, read N- to C-terminus: Nucleoporin AMO1 (557 aa).

The C3H1-type zinc-finger motif lies at 1-25 (MTVCRFWQQGYCRNGNACKFEHPPK). The stretch at 114 to 141 (QGALNEIQAAYQAAQQQIQNTLQNIPAA) forms a coiled coil. The segment at 161 to 297 (ESSKGSSTGG…SALGPKPGAF (137 aa)) is disordered. 10 SXFG repeats span residues 171–174 (SVFG), 200–203 (SAFG), 213–216 (SAFG), 228–231 (SAFG), 240–243 (SAFG), 249–252 (STFG), 262–265 (SAFG), 282–285 (SAFG), 303–306 (SAFG), and 314–317 (SPFG). Polar residues predominate over residues 195–215 (STPSTSAFGQPSPLGQKSSAF). The span at 243 to 253 (GSPQTGSTFGQ) shows a compositional bias: polar residues. The disordered stretch occupies residues 315–463 (PFGAAAQATQ…DLLSYATKNP (149 aa)). Polar residues-rich tracts occupy residues 321 to 338 (QATQ…QAAN) and 351 to 366 (GQPS…GQPS). SXFG repeat units lie at residues 348-351 (SAFG), 370-373 (SAFG), 387-390 (SLFG), and 407-410 (SAFG). Over residues 367–385 (TQSSAFGQQQPQQAGTFGS) the composition is skewed to low complexity. Polar residues predominate over residues 388–429 (LFGQQQQQPSNVFGQPSTTSAFGSQAATSGFSQLGNATSTIG). Residues 430 to 443 (ASPAGAQAPASKSP) show a composition bias toward low complexity.

The nuclear pore complex (NPC) constitutes the exclusive means of nucleocytoplasmic transport. NPCs allow the passive diffusion of ions and small molecules and the active, nuclear transport receptor-mediated bidirectional transport of macromolecules such as proteins, RNAs, ribonucleoparticles (RNPs), and ribosomal subunits across the nuclear envelope. The 55-60 MDa NPC is composed of at least 28 different subunits: AMO1, ELYS, GLE1, GLE2, MLP1, NDC1, NIC96, NSP1, NUP133, NUP145, NUP152, NUP159, NUP170, NUP188, NUP192, NUP37, NUP49, NUP53, NUP56, NUP57, NUP82, NUP84, NUP85, POM152, POM33, POM34, SEC13 and SEH1. Due to its 8-fold rotational symmetry, all subunits are present with 8 copies or multiples thereof.

The protein localises to the nucleus. Its subcellular location is the nuclear pore complex. The protein resides in the nucleus membrane. Functionally, functions as a component of the nuclear pore complex (NPC). NPC components, collectively referred to as nucleoporins (NUPs), can play the role of both NPC structural components and of docking or interaction partners for transiently associated nuclear transport factors. Active directional transport is assured by both, a Phe-Gly (FG) repeat affinity gradient for these transport factors across the NPC and a transport cofactor concentration gradient across the nuclear envelope (GSP1 and GSP2 GTPases associated predominantly with GTP in the nucleus, with GDP in the cytoplasm). AMO1 is specifically important for nuclear protein and mRNA export. The polypeptide is Nucleoporin AMO1 (AMO1) (Chaetomium thermophilum (strain DSM 1495 / CBS 144.50 / IMI 039719) (Thermochaetoides thermophila)).